We begin with the raw amino-acid sequence, 505 residues long: Lysine--tRNA ligase, heat inducible (505 aa).

Residues K114 and K156 each carry the N6-acetyllysine modification. Mg(2+) contacts are provided by E415 and E422.

This sequence belongs to the class-II aminoacyl-tRNA synthetase family. Homodimer. Mg(2+) is required as a cofactor.

The protein localises to the cytoplasm. The enzyme catalyses tRNA(Lys) + L-lysine + ATP = L-lysyl-tRNA(Lys) + AMP + diphosphate. In Escherichia coli O157:H7, this protein is Lysine--tRNA ligase, heat inducible (lysU).